Here is an 839-residue protein sequence, read N- to C-terminus: Taste receptor type 1 member 2 (839 aa).

The N-terminal stretch at 1–19 is a signal peptide; that stretch reads MGPRAKTICSLFFLLWVLA. Over 20–566 the chain is Extracellular; it reads EPAENSDFYL…VFLEWHEAPT (547 aa). Residues Asn84, Asn248, Asn292, Asn312, Asn368, Asn407, Asn428, Asn487, and Asn527 are each glycosylated (N-linked (GlcNAc...) asparagine). Residues 567-587 form a helical membrane-spanning segment; that stretch reads IAVALLAALGFLSTLAILVIF. At 588–602 the chain is on the cytoplasmic side; that stretch reads WRHFQTPIVRSAGGP. The chain crosses the membrane as a helical span at residues 603–623; the sequence is MCFLMLTLLLVAYMVVPVYVG. Residues 624-635 are Extracellular-facing; that stretch reads PPKVSTCLCRQA. A helical transmembrane segment spans residues 636-656; that stretch reads LFPLCFTICISCIAVRSFQIV. Topologically, residues 657–681 are cytoplasmic; the sequence is CAFKMASRFPRAYSYWVRYQGPYVS. The chain crosses the membrane as a helical span at residues 682-702; it reads MAFITVLKMVIVVIGMLATGL. Residues 703–727 are Extracellular-facing; that stretch reads SPTTRTDPDDPKITIVSCNPNYRNS. Residues 728 to 748 form a helical membrane-spanning segment; sequence LLFNTSLDLLLSVVGFSFAYM. Over 749–760 the chain is Cytoplasmic; that stretch reads GKELPTNYNEAK. Residues 761-781 form a helical membrane-spanning segment; the sequence is FITLSMTFYFTSSVSLCTFMS. The Extracellular segment spans residues 782-784; it reads AYS. Residues 785-805 form a helical membrane-spanning segment; sequence GVLVTIVDLLVTVLNLLAISL. Topologically, residues 806-839 are cytoplasmic; it reads GYFGPKCYMILFYPERNTSAYFNSMIQGYTMRRD.

The protein belongs to the G-protein coupled receptor 3 family. TAS1R subfamily. Forms heterodimers with TAS1R3.

Its subcellular location is the cell membrane. Its function is as follows. Putative taste receptor. TAS1R2/TAS1R3 recognizes diverse natural and synthetic sweeteners. In Pan troglodytes (Chimpanzee), this protein is Taste receptor type 1 member 2 (TAS1R2).